A 706-amino-acid chain; its full sequence is Translation initiation factor IF-2 (706 aa).

Positions 55 to 81 (AKETANEKPAEQKKQSSNKINDRKKND) are enriched in basic and acidic residues. Positions 55–127 (AKETANEKPA…KPKKELPEKI (73 aa)) are disordered. Positions 82–98 (VQNNQFNKNKKNNNQNK) are enriched in low complexity. The tr-type G domain occupies 207-376 (VRPPVVTIMG…LLVSEVGELK (170 aa)). Residues 216–223 (GHVDHGKT) form a G1 region. 216 to 223 (GHVDHGKT) contributes to the GTP binding site. The G2 stretch occupies residues 241 to 245 (GITQH). The tract at residues 262–265 (DTPG) is G3. Residues 262-266 (DTPGH) and 316-319 (NKID) contribute to the GTP site. The interval 316 to 319 (NKID) is G4. Positions 352–354 (SAK) are G5.

It belongs to the TRAFAC class translation factor GTPase superfamily. Classic translation factor GTPase family. IF-2 subfamily.

Its subcellular location is the cytoplasm. One of the essential components for the initiation of protein synthesis. Protects formylmethionyl-tRNA from spontaneous hydrolysis and promotes its binding to the 30S ribosomal subunits. Also involved in the hydrolysis of GTP during the formation of the 70S ribosomal complex. This chain is Translation initiation factor IF-2, found in Bacillus pumilus (strain SAFR-032).